Consider the following 292-residue polypeptide: Transforming growth factor-beta receptor type 3-like protein (292 aa).

The first 16 residues, 1-16 (MLGTVLLLALLPGITT), serve as a signal peptide directing secretion. Residues 17-170 (LPSGPPAPPF…APAPLTPPPP (154 aa)) enclose the ZP; truncated domain. At 17 to 244 (LPSGPPAPPF…PAPAALEPAP (228 aa)) the chain is on the extracellular side. A disulfide bond links cysteine 85 and cysteine 147. Positions 160 to 236 (RAPAPLTPPP…AVRPEPPAPA (77 aa)) are disordered. 2 stretches are compositionally biased toward pro residues: residues 164–175 (PLTPPPPPPPSR) and 213–222 (PRPPPRPPKS). Residues 245 to 265 (VVALVLAAFVLGAALAAGLGL) form a helical membrane-spanning segment. The Cytoplasmic portion of the chain corresponds to 266–292 (VCAHSAPHAPGPPARASPSGPQPRRSQ). A disordered region spans residues 273-292 (HAPGPPARASPSGPQPRRSQ). Low complexity predominate over residues 281–292 (ASPSGPQPRRSQ).

In terms of processing, glycosylated. Expressed in pituitary gland gonadotrope cells.

Its subcellular location is the cell membrane. Expressed in gonadotrope cells, acts as an inhibin B coreceptor and regulates follicle-stimulating hormone (FSH) levels and female fertility. The protein is Transforming growth factor-beta receptor type 3-like protein of Homo sapiens (Human).